A 107-amino-acid polypeptide reads, in one-letter code: SH3 domain-binding glutamic acid-rich-like protein 2 (107 aa).

Residues 61 to 67 (QGNPLPP) carry the SH3-binding motif.

It belongs to the SH3BGR family.

It is found in the nucleus. This chain is SH3 domain-binding glutamic acid-rich-like protein 2 (SH3BGRL2), found in Pongo abelii (Sumatran orangutan).